Consider the following 300-residue polypeptide: Nicotinate-nucleotide pyrophosphorylase [carboxylating] (300 aa).

Residues 5-9 (QLLPK) form an important for hexamer formation region. Residues Arg-107, 150-151 (RK), 172-173 (HR), Lys-183, Glu-213, Asp-234, 260-262 (SGG), and Gly-282 contribute to the quinolinate site.

Belongs to the NadC/ModD family. Hexamer formed by 3 homodimers.

It catalyses the reaction nicotinate beta-D-ribonucleotide + CO2 + diphosphate = quinolinate + 5-phospho-alpha-D-ribose 1-diphosphate + 2 H(+). The protein operates within cofactor biosynthesis; NAD(+) biosynthesis; nicotinate D-ribonucleotide from quinolinate: step 1/1. In terms of biological role, involved in the catabolism of quinolinic acid (QA). This chain is Nicotinate-nucleotide pyrophosphorylase [carboxylating] (qprt), found in Dictyostelium discoideum (Social amoeba).